The sequence spans 401 residues: Formate dehydrogenase (401 aa).

I123 and N147 together coordinate substrate. NAD(+) is bound by residues S148, 202–203, D222, 257–261, T283, D309, 333–336, and S381; these read RI, PLHPE, and HISG.

It belongs to the D-isomer specific 2-hydroxyacid dehydrogenase family. FDH subfamily. In terms of assembly, homodimer.

It localises to the cytoplasm. It carries out the reaction formate + NAD(+) = CO2 + NADH. Catalyzes the NAD(+)-dependent oxidation of formate to carbon dioxide. Formate oxidation is the final step in the methanol oxidation pathway in methylotrophic microorganisms. Has a role in the detoxification of exogenous formate in non-methylotrophic organisms. The sequence is that of Formate dehydrogenase from Pseudomonas sp. (strain 101) (Achromobacter parvulus T1).